The chain runs to 36 residues: Gloverin (36 aa).

It is found in the secreted. In terms of biological role, antibacterial protein. This chain is Gloverin, found in Heliothis virescens (Tobacco budworm moth).